A 611-amino-acid polypeptide reads, in one-letter code: Virulence metalloprotease (611 aa).

The signal sequence occupies residues Met-1 to Ala-25. Residues Ala-26–His-199 constitute a propeptide that is removed on maturation. His-346 is a Zn(2+) binding site. The active site involves Glu-347. Zn(2+)-binding residues include His-350 and Glu-370. The Proton donor role is filled by His-429.

The protein belongs to the peptidase M4 family. Requires Ca(2+) as cofactor. It depends on Zn(2+) as a cofactor. In terms of processing, seems to be more extensively processed.

Its subcellular location is the secreted. Functionally, extracellular zinc metalloprotease involved in the virulence mechanism of V.anguillarum. The polypeptide is Virulence metalloprotease (empA) (Vibrio anguillarum (Listonella anguillarum)).